Reading from the N-terminus, the 531-residue chain is Putative cysteine ligase BshC (531 aa).

Residues 447–481 (KAQEKKQTKGLDNLEKRLLKAEKKMHSEKLKKIIE) are a coiled coil.

It belongs to the BshC family.

The chain is Putative cysteine ligase BshC from Flavobacterium psychrophilum (strain ATCC 49511 / DSM 21280 / CIP 103535 / JIP02/86).